A 198-amino-acid chain; its full sequence is Angiopoietin-like protein 8 (198 aa).

The signal sequence occupies residues 1 to 15; it reads MAVLALCLLWTLASA.

The protein belongs to the ANGPTL8 family. As to quaternary structure, interacts with ANGPTL3. Post-translationally, proteolytically cleaved at the N-terminus. Expressed in liver and fat. Enriched in white and brown adipose tissues.

It localises to the secreted. Hormone that acts as a blood lipid regulator by regulating serum triglyceride levels. May be involved in the metabolic transition between fasting and refeeding: required to direct fatty acids to adipose tissue for storage in the fed state. According to a report, may act by promoting ANGPTL3 cleavage. According to another study, not required for cleavage of ANGPTL3. The polypeptide is Angiopoietin-like protein 8 (Mus musculus (Mouse)).